An 80-amino-acid polypeptide reads, in one-letter code: MPKKNDAPASFETALNELEQIVNRLESGDLPLEDALNEFERGVQLARQGQVKLQQAEQRVQILLSDSEDAAPTPFTPDAE.

It belongs to the XseB family. As to quaternary structure, heterooligomer composed of large and small subunits.

It localises to the cytoplasm. It carries out the reaction Exonucleolytic cleavage in either 5'- to 3'- or 3'- to 5'-direction to yield nucleoside 5'-phosphates.. Functionally, bidirectionally degrades single-stranded DNA into large acid-insoluble oligonucleotides, which are then degraded further into small acid-soluble oligonucleotides. This Enterobacter sp. (strain 638) protein is Exodeoxyribonuclease 7 small subunit.